The primary structure comprises 120 residues: NAD(P)H-quinone oxidoreductase subunit 3, chloroplastic (120 aa).

Transmembrane regions (helical) follow at residues 14-34 (LIISSLIPILAFFISGILAPI), 64-84 (MFALVFVVFDVETVFLYPWAM), and 88-108 (ILGVSVFIEALIFVLILIVGL).

The protein belongs to the complex I subunit 3 family. NDH is composed of at least 16 different subunits, 5 of which are encoded in the nucleus.

It is found in the plastid. It localises to the chloroplast thylakoid membrane. The enzyme catalyses a plastoquinone + NADH + (n+1) H(+)(in) = a plastoquinol + NAD(+) + n H(+)(out). The catalysed reaction is a plastoquinone + NADPH + (n+1) H(+)(in) = a plastoquinol + NADP(+) + n H(+)(out). Its function is as follows. NDH shuttles electrons from NAD(P)H:plastoquinone, via FMN and iron-sulfur (Fe-S) centers, to quinones in the photosynthetic chain and possibly in a chloroplast respiratory chain. The immediate electron acceptor for the enzyme in this species is believed to be plastoquinone. Couples the redox reaction to proton translocation, and thus conserves the redox energy in a proton gradient. This is NAD(P)H-quinone oxidoreductase subunit 3, chloroplastic from Coffea arabica (Arabian coffee).